The chain runs to 1906 residues: Retinoic acid-induced protein 1 (1906 aa).

Disordered stretches follow at residues 1–261 (MQSF…APGQ), 273–299 (RLSYDQQQQQQQQQQQQQQALQSRHHA), 335–370 (YQTFSPSSSHSPARSVGRSPSYSSTPSPLMPNLENF), 469–520 (VSRT…YLSG), 538–571 (SPARVNSNSKAKPESVSTCSVTSPDDMSTKSDDS), and 656–712 (SAWP…GTKP). Residues 13–24 (KQQNYQQTSQET) are compositionally biased toward polar residues. A compositionally biased stretch (low complexity) spans 66-75 (PSGTAAAVAA). Positions 124-134 (PQPPPPQPQPL) are enriched in pro residues. A compositionally biased stretch (low complexity) spans 213 to 226 (SQSFPTSSTYSSSV). A compositionally biased stretch (polar residues) spans 252 to 261 (TASSSLAPGQ). Composition is skewed to low complexity over residues 278-291 (QQQQQQQQQQQQQQ) and 339-353 (SPSSSHSPARSVGRS). Residues S339 and S345 each carry the phosphoserine modification. Position 472 is a phosphothreonine (T472). Residues 541-563 (RVNSNSKAKPESVSTCSVTSPDD) show a composition bias toward polar residues. Residues S568 and S683 each carry the phosphoserine modification. Position 696 is a phosphothreonine (T696). Phosphoserine is present on S805. K811 is covalently cross-linked (Glycyl lysine isopeptide (Lys-Gly) (interchain with G-Cter in SUMO2)). K819 participates in a covalent cross-link: Glycyl lysine isopeptide (Lys-Gly) (interchain with G-Cter in SUMO1). A phosphoserine mark is found at S880 and S892. A Glycyl lysine isopeptide (Lys-Gly) (interchain with G-Cter in SUMO1); alternate cross-link involves residue K901. K901 is covalently cross-linked (Glycyl lysine isopeptide (Lys-Gly) (interchain with G-Cter in SUMO2); alternate). The span at 937-947 (KVQSWFESSLS) shows a compositional bias: polar residues. 5 disordered regions span residues 937-1299 (KVQS…ETPD), 1344-1570 (FACK…PLDP), 1613-1637 (VVNSPGDAPKPHRKPSSSASSSSSS), 1746-1775 (AAAATAGKPPRPDGPADPAKQGPLRTSARG), and 1794-1819 (EEAAPADKGRKHECSKEAPAEPGGEA). Over residues 950 to 962 (KPGEEGPDGERAP) the composition is skewed to basic and acidic residues. Over residues 996–1005 (KSLRSRRVHR) the composition is skewed to basic residues. S1064 bears the Phosphoserine mark. T1068 is subject to Phosphothreonine. Low complexity predominate over residues 1101–1119 (PSPKAASSPSNPAALPVAS). S1122 is modified (phosphoserine). 2 short sequence motifs (nuclear localization signal) span residues 1160–1177 (RRRPSEGRLPNCRATKKL) and 1223–1240 (KRKSAFMAPVPTKKRNLV). The span at 1242–1252 (RSRSSSSSNAS) shows a compositional bias: low complexity. A phosphoserine mark is found at S1352, S1358, and S1374. K1425 is covalently cross-linked (Glycyl lysine isopeptide (Lys-Gly) (interchain with G-Cter in SUMO2)). A Phosphoserine modification is found at S1431. The span at 1444-1453 (PKKRSRKGRA) shows a compositional bias: basic residues. Composition is skewed to polar residues over residues 1482-1491 (SGTQGASEDN) and 1517-1534 (QPQTRAQKQPGHTNYSSY). Basic residues predominate over residues 1535-1545 (SKRKRLTRGRA). Over residues 1628 to 1637 (SSSASSSSSS) the composition is skewed to low complexity. The segment at 1780-1835 (LQSCYCCDGREDGGEEAAPADKGRKHECSKEAPAEPGGEAQEHWVHEACAVWTGGV) adopts a C2HC pre-PHD-type zinc-finger fold. Positions 1798–1812 (PADKGRKHECSKEAP) are enriched in basic and acidic residues. The segment at 1855–1903 (MMCSSCQEAGATIGCCHKGCLHTYHYPCASDAGCIFIEENFSLKCPKHK) adopts a PHD-type zinc-finger fold.

In terms of tissue distribution, expressed in all tissues examined with higher expression in the heart and brain. No expression was seen in the corpus callosum of the brain.

The protein resides in the cytoplasm. It localises to the nucleus. In terms of biological role, transcriptional regulator of the circadian clock components: CLOCK, BMAL1, BMAL2, PER1/3, CRY1/2, NR1D1/2 and RORA/C. Positively regulates the transcriptional activity of CLOCK a core component of the circadian clock. Regulates transcription through chromatin remodeling by interacting with other proteins in chromatin as well as proteins in the basic transcriptional machinery. May be important for embryonic and postnatal development. May be involved in neuronal differentiation. This chain is Retinoic acid-induced protein 1 (RAI1), found in Homo sapiens (Human).